The sequence spans 324 residues: MMSQQDLPTLFYSGKSNSAVPIISESELQTITAEPWLEISKKGLQLEGLNFDRQGQLFLLDVFEGNIFKVNPETKEIKRPFVSHKANPAAIKIHKDGRLFICYLGDFKSTGGIFAATENGDNIQDIIEDLSTEYCIDDMVFDSKGGFYFTDFRGYSTNPLGGVYYVTPDFKTVTPIIQNISVANGIALSTDEKVLWVTETTANRLHRIALEDDGVTIQPFGATIPYYFTGHEGPDSCCIDSDDNLYVAMYGQGRVLVFNKRGYPIGQILIPSRDEGHMLRSTHPQFIPGTNQLIICSNDIEMDGGSMLYTVNGFAKGHKSYQFQ.

Ca(2+) contacts are provided by Glu-47, Ser-109, Gly-111, Asp-129, Thr-132, Tyr-134, Asp-137, Asn-184, Asp-235, and Ser-236. The Proton donor role is filled by Asp-235.

The protein belongs to the SMP-30/CGR1 family. The cofactor is Ca(2+).

It is found in the cytoplasm. Functionally, exhibits lactonase activity. Acts in cells with perturbed membrane integrity and is possibly related to the membrane homeostasis. The protein is Lactonase drp35 (drp35) of Staphylococcus aureus (strain MRSA252).